The sequence spans 94 residues: Aspartyl/glutamyl-tRNA(Asn/Gln) amidotransferase subunit C (94 aa).

Belongs to the GatC family. Heterotrimer of A, B and C subunits.

It carries out the reaction L-glutamyl-tRNA(Gln) + L-glutamine + ATP + H2O = L-glutaminyl-tRNA(Gln) + L-glutamate + ADP + phosphate + H(+). It catalyses the reaction L-aspartyl-tRNA(Asn) + L-glutamine + ATP + H2O = L-asparaginyl-tRNA(Asn) + L-glutamate + ADP + phosphate + 2 H(+). Its function is as follows. Allows the formation of correctly charged Asn-tRNA(Asn) or Gln-tRNA(Gln) through the transamidation of misacylated Asp-tRNA(Asn) or Glu-tRNA(Gln) in organisms which lack either or both of asparaginyl-tRNA or glutaminyl-tRNA synthetases. The reaction takes place in the presence of glutamine and ATP through an activated phospho-Asp-tRNA(Asn) or phospho-Glu-tRNA(Gln). The polypeptide is Aspartyl/glutamyl-tRNA(Asn/Gln) amidotransferase subunit C (Caldicellulosiruptor saccharolyticus (strain ATCC 43494 / DSM 8903 / Tp8T 6331)).